Here is a 429-residue protein sequence, read N- to C-terminus: Keratin, type I cytoskeletal 47 kDa (429 aa).

Low complexity predominate over residues 1 to 16; that stretch reads MTSYRSSSASYYSGSS. Residues 1 to 20 are disordered; sequence MTSYRSSSASYYSGSSSKGG. The tract at residues 1-69 is head; the sequence is MTSYRSSSAS…EAASSSFGGN (69 aa). The segment at 70-105 is coil 1A; the sequence is EKHAMQNLNDRLASYLEKVRALEATNSDLEGKIRNW. Positions 70–385 constitute an IF rod domain; the sequence is EKHAMQNLND…RLLEGELGQV (316 aa). A linker 1 region spans residues 106–127; it reads YDKQSDAGIGAGSKDYSKYFEI. Positions 128-219 are coil 1B; that stretch reads IAELRNKIRA…KNHEEEMSHA (92 aa). Positions 220-242 are linker 12; it reads KSQSAGKVSVEMDAALGVDLTSI. Positions 243–381 are coil 2; that stretch reads LNNMRADYEI…QTYRRLLEGE (139 aa). Residues 382–429 are tail; the sequence is LGQVTTVANTSSVESKTESSSTSTTRTRMVKTIVEEVVDGKVVSSRVE. Positions 389–408 are disordered; it reads ANTSSVESKTESSSTSTTRT. The segment covering 391-408 has biased composition (low complexity); sequence TSSVESKTESSSTSTTRT.

The protein belongs to the intermediate filament family. Heterotetramer of two type I and two type II keratins.

The sequence is that of Keratin, type I cytoskeletal 47 kDa (xk81a1) from Xenopus laevis (African clawed frog).